The primary structure comprises 67 residues: Ferredoxin (67 aa).

2 consecutive 4Fe-4S ferredoxin-type domains span residues 3–31 (WKVSVDQDTCIGDAICASLCPDVFEMNDE) and 36–67 (PKVEIIEDEELYNCAKEAMESCPVSAITIEEA). Cysteine 12, aspartate 15, and cysteine 18 together coordinate [4Fe-4S] cluster. Cysteine 22 and cysteine 49 are disulfide-bonded. Residue cysteine 57 coordinates [4Fe-4S] cluster.

Requires [4Fe-4S] cluster as cofactor. The cofactor is [3Fe-4S] cluster.

Functionally, ferredoxins are iron-sulfur proteins that transfer electrons in a wide variety of metabolic reactions. In Pyrococcus abyssi (strain GE5 / Orsay), this protein is Ferredoxin (fdxA).